The sequence spans 174 residues: Inactive signal peptidase IA (174 aa).

Over 1–7 (MKKVVKY) the chain is Cytoplasmic. The chain crosses the membrane as a helical span at residues 8–28 (LISLILAIIIVLFVQTFVIVG). Residues 29–174 (HVIPNNDMSP…FSKWTIQFKS (146 aa)) are Extracellular-facing.

The protein belongs to the peptidase S26 family.

The protein resides in the cell membrane. Its function is as follows. Catalytically inactive. This is Inactive signal peptidase IA (spsA) from Staphylococcus aureus (strain Mu50 / ATCC 700699).